The primary structure comprises 602 residues: Cytoskeleton-associated protein 4 (602 aa).

Residues 1–83 (MPSAKQRGSK…GGGGKSSSSS (83 aa)) form a disordered region. Residues 1–106 (MPSAKQRGSK…SASCSRRLGR (106 aa)) are Cytoplasmic-facing. Phosphoserine occurs at positions 3, 17, and 19. Residue K21 is modified to N6-acetyllysine. Pro residues predominate over residues 35-52 (KPPPAPQQPPPPPAPHPQ). The segment covering 53–64 (QHPQQHPQNQAH) has biased composition (low complexity). C100 carries S-palmitoyl cysteine; by ZDHHC2 lipidation. The chain crosses the membrane as a helical span at residues 107 to 127 (ALNFLFYLALVAAAAFSGWCV). Over 128 to 602 (HHVLEEVQQV…VKVEKIHEKV (475 aa)) the chain is Extracellular. Residues 130–214 (VLEEVQQVRR…QKLQNEILKD (85 aa)) are a coiled coil. A Phosphoserine; by FAM20C modification is found at S232. 2 coiled-coil regions span residues 256 to 460 (TEVQ…GLGS) and 533 to 602 (LSSL…HEKV). The residue at position 312 (S312) is a Phosphoserine.

As to quaternary structure, interacts with REEP5. Post-translationally, reversibly palmitoylated. Palmitoylation at Cys-100 by ZDHHC2 is required for its trafficking from the ER to the plasma membrane and for its perinuclear localization. Palmitoylation by ZDHHC2 is also required for its function in APF-mediated antiproliferative signaling. In terms of processing, increased phosphorylation during mitosis prevents binding to microtubules.

The protein localises to the endoplasmic reticulum membrane. It localises to the cell membrane. It is found in the cytoplasm. Its subcellular location is the cytoskeleton. The protein resides in the perinuclear region. In terms of biological role, mediates the anchoring of the endoplasmic reticulum to microtubules. High-affinity epithelial cell surface receptor for the FZD8-related low molecular weight sialoglycopeptide APF/antiproliferative factor. Mediates the APF antiproliferative signaling within cells. The chain is Cytoskeleton-associated protein 4 (CKAP4) from Homo sapiens (Human).